We begin with the raw amino-acid sequence, 429 residues long: MKVLVIGNGGREHALAWKAAQSPLVETVFVAPGNAGTALEPALQNVAIGVTDIPALLDFAQNEKIDLTIVGPEAPLVKGVVDTFRAAGLKIFGPTAGAAQLEGSKAFTKDFLARHKIPTAEYQNFTEVEPALAYLREKGAPIVIKADGLAAGKGVIVAMTLEEAEAAVHDMLAGNAFGDAGHRIVIEEFLDGEEASFIVMVDGEHVLPMATSQDHKRVGDKDTGPNTGGMGAYSPAPVVTDDVHQRTMERIIWPTVKGMAAEGNTYTGFLYAGLMIDKQGNPKVIEFNCRFGDPETQPIMLRMKSDLVELCLAACESKLDEKTSEWDERASLGVVMAAGGYPGDYRTGDVIHGLPLEEVAGGKVFHAGTKLADDEQVVTNGGRVLCVTALGHTVAEAQKRAYALMTDIHWDDCFCRKDIGWRAIEREQN.

In terms of domain architecture, ATP-grasp spans 109 to 316 (KDFLARHKIP…LVELCLAACE (208 aa)). 135–196 (LREKGAPIVI…EEFLDGEEAS (62 aa)) contributes to the ATP binding site. Residues 212–236 (SQDHKRVGDKDTGPNTGGMGAYSPA) form a disordered region. Basic and acidic residues predominate over residues 213–223 (QDHKRVGDKDT). The Mg(2+) site is built by Glu-286 and Asn-288.

The protein belongs to the GARS family. In terms of assembly, monomer. The cofactor is Mg(2+). Mn(2+) is required as a cofactor.

It catalyses the reaction 5-phospho-beta-D-ribosylamine + glycine + ATP = N(1)-(5-phospho-beta-D-ribosyl)glycinamide + ADP + phosphate + H(+). Its pathway is purine metabolism; IMP biosynthesis via de novo pathway; N(1)-(5-phospho-D-ribosyl)glycinamide from 5-phospho-alpha-D-ribose 1-diphosphate: step 2/2. Functionally, catalyzes the reversible conversion of phosphoribosylamine to glycinamide ribonucleotide, an enzymatic step in purine biosynthesis pathway. This Escherichia coli (strain K12) protein is Phosphoribosylamine--glycine ligase (purD).